The primary structure comprises 345 residues: Splicing factor YJU2 (345 aa).

Residues Cys-43, Cys-46, Cys-80, and Cys-83 each coordinate Zn(2+). Positions 205-345 (KRLRDSDSEE…YSDSDDSSSD (141 aa)) are disordered. Residues 217 to 232 (ENAKERSKKHIADKPT) show a composition bias toward basic and acidic residues. Composition is skewed to low complexity over residues 308–317 (SSITSSSASS) and 327–337 (GSSLGLLGAYS).

It belongs to the CWC16 family. YJU2 subfamily. Component of the spliceosome. Present in the activated B complex, the catalytically activated B* complex which catalyzes the branching, the catalytic step 1 C complex catalyzing the exon ligation, and the postcatalytic P complex containing the ligated exons (mRNA) and the excised lariat intron.

Its subcellular location is the nucleus. Part of the spliceosome which catalyzes two sequential transesterification reactions, first the excision of the non-coding intron from pre-mRNA and then the ligation of the coding exons to form the mature mRNA. Plays a role in stabilizing the structure of the spliceosome catalytic core and docking of the branch helix into the active site, producing 5'-exon and lariat intron-3'-intermediates. May protect cells from TP53-dependent apoptosis upon dsDNA break damage through association with PRP19-CD5L complex. The polypeptide is Splicing factor YJU2 (Danio rerio (Zebrafish)).